Reading from the N-terminus, the 205-residue chain is Small ribosomal subunit protein uS4 (205 aa).

The S4 RNA-binding domain maps to 94-157 (SRLDTVVYRM…QQIPLIQESI (64 aa)).

This sequence belongs to the universal ribosomal protein uS4 family. In terms of assembly, part of the 30S ribosomal subunit. Contacts protein S5. The interaction surface between S4 and S5 is involved in control of translational fidelity.

Its function is as follows. One of the primary rRNA binding proteins, it binds directly to 16S rRNA where it nucleates assembly of the body of the 30S subunit. In terms of biological role, with S5 and S12 plays an important role in translational accuracy. The polypeptide is Small ribosomal subunit protein uS4 (Rickettsia prowazekii (strain Madrid E)).